A 578-amino-acid chain; its full sequence is Monooxygenase cfoE (578 aa).

Residues 549–569 (IVLSGVPLVVFGSLHLVLWIF) form a helical membrane-spanning segment.

Belongs to the FMO family. It depends on FAD as a cofactor.

It localises to the membrane. Its pathway is secondary metabolite biosynthesis; flavonoid biosynthesis. In terms of biological role, monooxygenase; part of the gene cluster that mediates the biosynthesis of chlorflavonin, a fungal flavonoid with acetolactate synthase inhibitory activity. Within the pathway, cfoE is responsible for the chlorination of the flavonoid skeleton at position C3'. The pathway begins with the PKS-NRPS hybrid synthetase cfoA that uses benzoic acid or p-hydroxybenzoic acid as a starter unit with four rounds of chain elongation using malonyl-CoA to form the chalcone skeleton. Then, a new type of chalcone isomerase, cfoK, catalyzes the conversion of the chalcone into a flavanone by a histidine-mediated oxa-Michael addition mechanism. The desaturation of flavanone to flavone is catalyzed by a new type of flavone synthase, the flavin mononucleotide (FMN)-dependent oxidoreductase cfoJ. Monooxygenases cfoF, cfoG, and P450 cfoH are responsible for the hydroxylation of the flavonoid skeleton at sites C3, C8, and C2', respectively. Like cfoF, the dehydratase cfoI plays also a role in the hydroxylation of position C3. Methyltransferases cfoB, cfoC, and cfoD then catalyze the methylation of C7-OH, C8-OH, and C3-OH, respectively. Finally, the monooxygenase cfoE is responsible for the chlorination of flavonoid at position C3'. The protein is Monooxygenase cfoE of Aspergillus candidus.